A 1006-amino-acid polypeptide reads, in one-letter code: Serine/threonine-protein phosphatase BSL3 (1006 aa).

Positions Met-1 to Ala-67 are disordered. Composition is skewed to low complexity over residues Ser-38 to Pro-47 and Gln-54 to Ala-67. Kelch repeat units follow at residues Thr-138–Ala-184, Tyr-242–Ala-290, Leu-295–Asn-345, Ser-351–Gly-398, and Leu-419–Gly-465. Disordered regions lie at residues Ala-454–Pro-494 and Gly-552–Asp-579. Residue Ser-616 is modified to Phosphoserine. Mn(2+) is bound by residues Asp-709, His-711, Asp-743, and Asn-775. Catalysis depends on His-776, which acts as the Proton donor. The Mn(2+) site is built by His-828 and His-907. Ser-964 carries the post-translational modification Phosphoserine. A disordered region spans residues Asn-982 to Ile-1006.

It belongs to the PPP phosphatase family. BSU subfamily. Mn(2+) serves as cofactor. Expressed throughout the plant, with a higher level in younger parts.

Its subcellular location is the nucleus. The enzyme catalyses O-phospho-L-seryl-[protein] + H2O = L-seryl-[protein] + phosphate. It carries out the reaction O-phospho-L-threonyl-[protein] + H2O = L-threonyl-[protein] + phosphate. Phosphatase involved in elongation process, probably by acting as a regulator of brassinolide signaling. The chain is Serine/threonine-protein phosphatase BSL3 (BSL3) from Arabidopsis thaliana (Mouse-ear cress).